The chain runs to 185 residues: Peptidyl-tRNA hydrolase (185 aa).

Y14 provides a ligand contact to tRNA. Residue H19 is the Proton acceptor of the active site. TRNA-binding residues include Y65, N67, and N113.

Belongs to the PTH family. Monomer.

The protein resides in the cytoplasm. It carries out the reaction an N-acyl-L-alpha-aminoacyl-tRNA + H2O = an N-acyl-L-amino acid + a tRNA + H(+). Hydrolyzes ribosome-free peptidyl-tRNAs (with 1 or more amino acids incorporated), which drop off the ribosome during protein synthesis, or as a result of ribosome stalling. In terms of biological role, catalyzes the release of premature peptidyl moieties from peptidyl-tRNA molecules trapped in stalled 50S ribosomal subunits, and thus maintains levels of free tRNAs and 50S ribosomes. The chain is Peptidyl-tRNA hydrolase from Rickettsia rickettsii (strain Iowa).